The chain runs to 306 residues: Homoserine O-acetyltransferase (306 aa).

Cys-142 functions as the Acyl-thioester intermediate in the catalytic mechanism. The substrate site is built by Lys-163 and Ser-192. The active-site Proton acceptor is the His-235. Glu-237 is a catalytic residue. Residue Arg-249 participates in substrate binding.

The protein belongs to the MetA family.

The protein localises to the cytoplasm. The enzyme catalyses L-homoserine + acetyl-CoA = O-acetyl-L-homoserine + CoA. Its pathway is amino-acid biosynthesis; L-methionine biosynthesis via de novo pathway; O-acetyl-L-homoserine from L-homoserine: step 1/1. Its function is as follows. Transfers an acetyl group from acetyl-CoA to L-homoserine, forming acetyl-L-homoserine. This chain is Homoserine O-acetyltransferase, found in Brucella melitensis biotype 1 (strain ATCC 23456 / CCUG 17765 / NCTC 10094 / 16M).